The primary structure comprises 199 residues: Twist-related protein (199 aa).

The segment at 1 to 43 (MQEHQLSRVTSGNKKKYQSFDDESRDEKRMKCDSTDKLESNSN) is disordered. The segment covering 25-39 (RDEKRMKCDSTDKLE) has biased composition (basic and acidic residues). One can recognise a bHLH domain in the interval 51–102 (THRVIANIRERQRTQALNQSFSTLRKIIPTLPSDKLSKIQTLRLAAMYIDFL).

As to quaternary structure, efficient DNA binding requires dimerization with another bHLH protein. Homodimer. As to expression, expression is seen at the point of medusa formation in the ectodermal and endodermal bud tissues, and in the entocodon which gives rise to all smooth and striated muscle cells. After the subumbrellar plate differentiates from the endoderm, strong expression is detected until the medusa detaches from the gonzoid. Expression is observed in the distal part of the medusa but diminishes in entocodon-derived muscles as the tissues differentiate, with expression disappearing completely after stage 8. In later stages expression is seen in the distal and proximal parts of the bud and depending on state of maturity, in the developing gonadal tissue.

It localises to the nucleus. Probable transcription factor, which may be responsible for the formation of myoepithelial cells in early muscle development in larva and the formation of non-muscle tissues in later bud stages and mesoderm-like structures in the medusa. This Podocoryna carnea (Hydrozoan) protein is Twist-related protein.